The primary structure comprises 111 residues: Phosphoribosyl-ATP pyrophosphatase (111 aa).

Belongs to the PRA-PH family.

The protein resides in the cytoplasm. The enzyme catalyses 1-(5-phospho-beta-D-ribosyl)-ATP + H2O = 1-(5-phospho-beta-D-ribosyl)-5'-AMP + diphosphate + H(+). The protein operates within amino-acid biosynthesis; L-histidine biosynthesis; L-histidine from 5-phospho-alpha-D-ribose 1-diphosphate: step 2/9. This is Phosphoribosyl-ATP pyrophosphatase from Ectopseudomonas mendocina (strain ymp) (Pseudomonas mendocina).